The following is a 122-amino-acid chain: MIYWIFLGLAIATEIIGTLSMKYASISGGMTGHIVMYVMITASYVMLSMAVKRVALGVAYALWEGIGILFITLFSVLWFDEPISALKVLGLVTLIVGIMLVKSGTRKPRKQVTPRGDNHATA.

The next 4 helical transmembrane spans lie at 1-21 (MIYW…TLSM), 31-51 (TGHI…SMAV), 54-74 (VALG…ITLF), and 81-101 (EPIS…IMLV).

The protein belongs to the drug/metabolite transporter (DMT) superfamily. Small multidrug resistance (SMR) (TC 2.A.7.1) family. MdtJ subfamily. Forms a complex with MdtI.

The protein localises to the cell inner membrane. Catalyzes the excretion of spermidine. In Serratia proteamaculans (strain 568), this protein is Spermidine export protein MdtJ.